Consider the following 371-residue polypeptide: Aminomethyltransferase (371 aa).

Belongs to the GcvT family. The glycine cleavage system is composed of four proteins: P, T, L and H.

It carries out the reaction N(6)-[(R)-S(8)-aminomethyldihydrolipoyl]-L-lysyl-[protein] + (6S)-5,6,7,8-tetrahydrofolate = N(6)-[(R)-dihydrolipoyl]-L-lysyl-[protein] + (6R)-5,10-methylene-5,6,7,8-tetrahydrofolate + NH4(+). Functionally, the glycine cleavage system catalyzes the degradation of glycine. The polypeptide is Aminomethyltransferase (Cutibacterium acnes (strain DSM 16379 / KPA171202) (Propionibacterium acnes)).